Here is a 182-residue protein sequence, read N- to C-terminus: tRNA-splicing endonuclease (182 aa).

Active-site residues include tyrosine 119, histidine 127, and lysine 158.

This sequence belongs to the tRNA-intron endonuclease family. Archaeal short subfamily. In terms of assembly, homotetramer; although the tetramer contains four active sites, only two participate in the cleavage. Therefore, it should be considered as a dimer of dimers.

It catalyses the reaction pretRNA = a 3'-half-tRNA molecule with a 5'-OH end + a 5'-half-tRNA molecule with a 2',3'-cyclic phosphate end + an intron with a 2',3'-cyclic phosphate and a 5'-hydroxyl terminus.. Its function is as follows. Endonuclease that removes tRNA introns. Cleaves pre-tRNA at the 5'- and 3'-splice sites to release the intron. The products are an intron and two tRNA half-molecules bearing 2',3' cyclic phosphate and 5'-OH termini. Recognizes a pseudosymmetric substrate in which 2 bulged loops of 3 bases are separated by a stem of 4 bp. The protein is tRNA-splicing endonuclease of Saccharolobus islandicus (strain M.16.27) (Sulfolobus islandicus).